The following is a 681-amino-acid chain: DNA-directed RNA polymerase subunit beta' (681 aa).

Zn(2+) contacts are provided by C69, C71, C87, and C90. Residues D489, D491, and D493 each coordinate Mg(2+).

The protein belongs to the RNA polymerase beta' chain family. RpoC1 subfamily. In terms of assembly, in plastids the minimal PEP RNA polymerase catalytic core is composed of four subunits: alpha, beta, beta', and beta''. When a (nuclear-encoded) sigma factor is associated with the core the holoenzyme is formed, which can initiate transcription. Mg(2+) serves as cofactor. Zn(2+) is required as a cofactor.

It is found in the plastid. It localises to the chloroplast. The catalysed reaction is RNA(n) + a ribonucleoside 5'-triphosphate = RNA(n+1) + diphosphate. In terms of biological role, DNA-dependent RNA polymerase catalyzes the transcription of DNA into RNA using the four ribonucleoside triphosphates as substrates. This is DNA-directed RNA polymerase subunit beta' from Nicotiana tomentosiformis (Tobacco).